The chain runs to 130 residues: Small ribosomal subunit protein uS9 (130 aa).

It belongs to the universal ribosomal protein uS9 family.

The chain is Small ribosomal subunit protein uS9 from Shigella dysenteriae serotype 1 (strain Sd197).